A 1388-amino-acid polypeptide reads, in one-letter code: Kinesin-like protein KIF15 (1388 aa).

The interval 1–25 (MAPGCKTELRSVTNGQSNQPSNEGD) is disordered. Positions 10–22 (RSVTNGQSNQPSN) are enriched in polar residues. The Kinesin motor domain maps to 26 to 363 (AIKVFVRIRP…LNFAQRAKLI (338 aa)). Residue 109 to 116 (GQTGSGKT) participates in ATP binding. Positions 368-1388 (VVNEDTQGNV…FLKEKKRSES (1021 aa)) form a coiled coil. Thr399 carries the post-translational modification Phosphothreonine. Ser568 is modified (phosphoserine). Lys1009 bears the N6-acetyllysine mark. A phosphoserine mark is found at Ser1141 and Ser1169. Residues 1228 to 1250 (QKENSDQNHPDNQQLKNEQEESI) are disordered.

The protein belongs to the TRAFAC class myosin-kinesin ATPase superfamily. Kinesin family. KLP2 subfamily. Interacts with MKI67 and TPX2. In terms of tissue distribution, expressed in testis, colon, thymus and in breast cancer.

The protein localises to the cytoplasm. It localises to the cytoskeleton. Its subcellular location is the spindle. Plus-end directed kinesin-like motor enzyme involved in mitotic spindle assembly. This Homo sapiens (Human) protein is Kinesin-like protein KIF15 (KIF15).